The following is an 803-amino-acid chain: Volume-regulated anion channel subunit LRRC8C (803 aa).

Over 1–22 the chain is Cytoplasmic; the sequence is MIPVTEFRQFSEQQPAFRVLKP. The helical transmembrane segment at 23 to 43 threads the bilayer; it reads WWDVFTDYLSVAMLMIGVFGC. At 44-125 the chain is on the extracellular side; that stretch reads TLQVMQDKII…YERALHWYAK (82 aa). 2 disulfides stabilise this stretch: Cys54-Cys308 and Cys115-Cys293. 2 N-linked (GlcNAc...) asparagine glycosylation sites follow: Asn64 and Asn70. Residues 126–146 traverse the membrane as a helical segment; sequence YFPYLVLIHTLVFMLCSNFWF. At 147–266 the chain is on the cytoplasmic side; the sequence is KFPGSSSKIE…ILYAMYVRQT (120 aa). A disordered region spans residues 177-209; it reads EVSGEDSEEKDNRKNNMSRSNTTQSGPEGSLVN. Residues 191 to 209 show a composition bias toward polar residues; that stretch reads NNMSRSNTTQSGPEGSLVN. 2 positions are modified to phosphoserine: Ser212 and Ser215. A helical transmembrane segment spans residues 267–287; the sequence is VLKVIKFLIIIAYNSALVSKV. At 288-320 the chain is on the extracellular side; the sequence is QFTVDCNVDIQDMTGYKNFSCNHTMAHLFSKLS. A helical transmembrane segment spans residues 321-341; it reads FCYLCFVSIYGLTCLYTLYWL. Topologically, residues 342 to 803 are cytoplasmic; that stretch reads FYRSLKEYSF…SDVREQMKTE (462 aa). LRR repeat units follow at residues 397–419, 420–443, 446–465, 468–490, 492–513, 515–536, 543–563, 566–586, 590–611, 613–634, 638–659, 661–682, 684–705, 707–728, 730–751, 753–774, and 776–799; these read ENKL…QKLQ, TNAH…VFEI, LQSL…TIAQ, NLQE…SFLK, NLKV…MYGL, NLEE…VTLE, SLKI…VVDV, HLQK…NNLK, NLTE…VFSL, SLQE…VSFQ, KLTV…IKKL, SLER…LFLC, KIRY…IGVL, SLQY…LYFC, KLKT…IGNL, FLSY…LGDC, and ALKR…VREQ.

This sequence belongs to the LRRC8 family. As to quaternary structure, heterohexamer; oligomerizes with other LRRC8 proteins (LRRC8A, LRRC8B, LRRC8D and/or LRRC8E) to form a heterohexamer. Homoheptamer; inactive, likely because it is not targeted to the plasma membrane in the absence of LRRC8A. In vivo, the subunit composition may depend primarily on expression levels, and heterooligomeric channels containing various proportions of the different LRRC8 proteins may coexist.

It is found in the cell membrane. The protein resides in the endoplasmic reticulum membrane. It carries out the reaction chloride(in) = chloride(out). The catalysed reaction is iodide(out) = iodide(in). It catalyses the reaction taurine(out) = taurine(in). The enzyme catalyses 2',3'-cGAMP(out) = 2',3'-cGAMP(in). Functionally, non-essential component of the volume-regulated anion channel (VRAC, also named VSOAC channel), an anion channel required to maintain a constant cell volume in response to extracellular or intracellular osmotic changes. The VRAC channel conducts iodide better than chloride and can also conduct organic osmolytes like taurine. Plays a redundant role in the efflux of amino acids, such as aspartate and glutamate, in response to osmotic stress. The VRAC channel also mediates transport of immunoreactive cyclic dinucleotide GMP-AMP (2'-3'-cGAMP), an immune messenger produced in response to DNA virus in the cytosol. Channel activity requires LRRC8A plus at least one other family member (LRRC8B, LRRC8C, LRRC8D or LRRC8E); channel characteristics depend on the precise subunit composition. This chain is Volume-regulated anion channel subunit LRRC8C, found in Bos taurus (Bovine).